Reading from the N-terminus, the 271-residue chain is MATTQQSGFAPAASPLASTIVQTPDDAIVAGFTSIPSQGDNMPAYHARPKQSDGPLPVVIVVQEIFGVHEHIRDICRRLALEGYLAIAPELYFREGDPNDFADIPTLLSGLVAKVPDSQVLADLDHVASWASRNGGDVHRLMITGFCWGGRITWLYAAHNPQLKAAVAWYGKLTGDKSLNSPKQPVDIATDLNAPILGLYGGQDNSIPQESVETMRQALRAANAKAEIIVYPDAGHAFNADYRPSYHAASAEDGWQRMLEWFKQYGGKKSL.

Catalysis depends on residues C147, D204, and H236.

The protein belongs to the dienelactone hydrolase family.

It carries out the reaction 2-(5-oxo-2,5-dihydrofuran-2-ylidene)acetate + H2O = 4-oxohex-2-enedioate + H(+). The polypeptide is Putative carboxymethylenebutenolidase (ysgA) (Escherichia coli (strain K12)).